A 264-amino-acid chain; its full sequence is Thiazole synthase (264 aa).

The active-site Schiff-base intermediate with DXP is K106. 1-deoxy-D-xylulose 5-phosphate-binding positions include G167, 193–194 (AG), and 215–216 (NS).

This sequence belongs to the ThiG family. Homotetramer. Forms heterodimers with either ThiH or ThiS.

The protein localises to the cytoplasm. It catalyses the reaction [ThiS sulfur-carrier protein]-C-terminal-Gly-aminoethanethioate + 2-iminoacetate + 1-deoxy-D-xylulose 5-phosphate = [ThiS sulfur-carrier protein]-C-terminal Gly-Gly + 2-[(2R,5Z)-2-carboxy-4-methylthiazol-5(2H)-ylidene]ethyl phosphate + 2 H2O + H(+). It functions in the pathway cofactor biosynthesis; thiamine diphosphate biosynthesis. In terms of biological role, catalyzes the rearrangement of 1-deoxy-D-xylulose 5-phosphate (DXP) to produce the thiazole phosphate moiety of thiamine. Sulfur is provided by the thiocarboxylate moiety of the carrier protein ThiS. In vitro, sulfur can be provided by H(2)S. This Prochlorococcus marinus (strain MIT 9312) protein is Thiazole synthase.